The primary structure comprises 210 residues: Ribosomal RNA large subunit methyltransferase E (210 aa).

Glycine 67, tryptophan 69, aspartate 87, aspartate 103, and aspartate 128 together coordinate S-adenosyl-L-methionine. Residue lysine 168 is the Proton acceptor of the active site.

The protein belongs to the class I-like SAM-binding methyltransferase superfamily. RNA methyltransferase RlmE family.

The protein localises to the cytoplasm. The enzyme catalyses uridine(2552) in 23S rRNA + S-adenosyl-L-methionine = 2'-O-methyluridine(2552) in 23S rRNA + S-adenosyl-L-homocysteine + H(+). Functionally, specifically methylates the uridine in position 2552 of 23S rRNA at the 2'-O position of the ribose in the fully assembled 50S ribosomal subunit. This Psychrobacter sp. (strain PRwf-1) protein is Ribosomal RNA large subunit methyltransferase E.